A 940-amino-acid polypeptide reads, in one-letter code: Protein translocase subunit SecA (940 aa).

Residues Q87, 105–109 (GEGKT), and D494 each bind ATP. Residues 879 to 940 (AQQQKKAVEG…KCHGASEASV (62 aa)) are disordered. Basic and acidic residues predominate over residues 884–898 (KAVEGRATADGKLDE). The span at 900-915 (SVAAAARPAAASRPAV) shows a compositional bias: low complexity. 4 residues coordinate Zn(2+): C921, C923, C932, and H933.

It belongs to the SecA family. In terms of assembly, monomer and homodimer. Part of the essential Sec protein translocation apparatus which comprises SecA, SecYEG and auxiliary proteins SecDF-YajC and YidC. Zn(2+) is required as a cofactor.

Its subcellular location is the cell inner membrane. It is found in the cytoplasm. It carries out the reaction ATP + H2O + cellular proteinSide 1 = ADP + phosphate + cellular proteinSide 2.. Functionally, part of the Sec protein translocase complex. Interacts with the SecYEG preprotein conducting channel. Has a central role in coupling the hydrolysis of ATP to the transfer of proteins into and across the cell membrane, serving as an ATP-driven molecular motor driving the stepwise translocation of polypeptide chains across the membrane. The protein is Protein translocase subunit SecA of Myxococcus xanthus (strain DK1622).